Reading from the N-terminus, the 151-residue chain is Ocs element-binding factor 1 (151 aa).

Positions 1–17 (MSSSSLSPTAGRTSGSD) are enriched in polar residues. The tract at residues 1-47 (MSSSSLSPTAGRTSGSDGDSAADTHRREKRRLSNRESARRSRLRKQQ) is disordered. The segment covering 22-39 (ADTHRREKRRLSNRESAR) has biased composition (basic and acidic residues). The bZIP domain occupies 24-87 (THRREKRRLS…TRVEQENTVL (64 aa)). The segment at 26–45 (RREKRRLSNRESARRSRLRK) is basic motif. The tract at residues 52–59 (LVQEVARL) is leucine-zipper.

This sequence belongs to the bZIP family. In terms of tissue distribution, roots and shoots of young plants, and basal portion of leaves.

The protein localises to the nucleus. May contribute to developmentally specific patterns of gene expression. Binds specifically to ocs elements which are transcriptional enhancer found in the promoters of several plant genes. OCSBF-1 is able to bind to a site within each half of the ocs element as well as to animal AP-1 and CREB sites. In Zea mays (Maize), this protein is Ocs element-binding factor 1 (OBF1).